We begin with the raw amino-acid sequence, 406 residues long: Probable 4-hydroxyphenylpyruvate dioxygenase 2 (406 aa).

VOC domains follow at residues glycine 22–arginine 174 and glutamate 205–lysine 363. Histidine 208, histidine 291, and glutamate 374 together coordinate Fe cation.

Belongs to the 4HPPD family. The cofactor is Fe cation.

The catalysed reaction is 3-(4-hydroxyphenyl)pyruvate + O2 = homogentisate + CO2. It functions in the pathway amino-acid degradation; L-phenylalanine degradation; acetoacetate and fumarate from L-phenylalanine: step 3/6. The protein is Probable 4-hydroxyphenylpyruvate dioxygenase 2 of Aspergillus fumigatus (strain ATCC MYA-4609 / CBS 101355 / FGSC A1100 / Af293) (Neosartorya fumigata).